A 203-amino-acid chain; its full sequence is HTH-type transcriptional regulator CymR (203 aa).

One can recognise an HTH tetR-type domain in the interval 13–73 (METQGKLIAA…ATFEWLYEQI (61 aa)). Residues 36–55 (RIADVPGAAGVSRGAQSHHF) constitute a DNA-binding region (H-T-H motif).

Involved in the repression of the cym and cmt operons which are responsible of the p-cymene degradation. The chain is HTH-type transcriptional regulator CymR from Pseudomonas putida (Arthrobacter siderocapsulatus).